A 159-amino-acid chain; its full sequence is MQKRAIYPGTFDPITNGHIDIVTRATQMFDHVILAIAASPSKKPMFTLEERVALAQHATAHLGNVEVVGFSDLMANFARNQHATVLIRGLRAVADFEYEMQLAHMNRHLMPELESVFLMPSKEWSFISSSLVKEVARHQGDVTHFLPENVHQALMAKLA.

Residue Thr10 participates in substrate binding. Residues 10–11 (TF) and His18 contribute to the ATP site. Substrate contacts are provided by Lys42, Met74, and Arg88. Residues 89–91 (GLR), Glu99, and 124–130 (WSFISSS) each bind ATP.

This sequence belongs to the bacterial CoaD family. As to quaternary structure, homohexamer. Mg(2+) is required as a cofactor.

The protein localises to the cytoplasm. The enzyme catalyses (R)-4'-phosphopantetheine + ATP + H(+) = 3'-dephospho-CoA + diphosphate. It participates in cofactor biosynthesis; coenzyme A biosynthesis; CoA from (R)-pantothenate: step 4/5. Functionally, reversibly transfers an adenylyl group from ATP to 4'-phosphopantetheine, yielding dephospho-CoA (dPCoA) and pyrophosphate. In Escherichia fergusonii (strain ATCC 35469 / DSM 13698 / CCUG 18766 / IAM 14443 / JCM 21226 / LMG 7866 / NBRC 102419 / NCTC 12128 / CDC 0568-73), this protein is Phosphopantetheine adenylyltransferase.